A 173-amino-acid polypeptide reads, in one-letter code: Propanediol dehydratase small subunit (173 aa).

The protein belongs to the diol/glycerol dehydratase small subunit family. In terms of assembly, the propanediol dehydratase enzyme is a heterotrimeric complex composed of a large (PduC), a medium (PduD) and a small (PduE) subunit. Adenosylcob(III)alamin is required as a cofactor.

Its subcellular location is the bacterial microcompartment. It catalyses the reaction propane-1,2-diol = propanal + H2O. The protein operates within polyol metabolism; 1,2-propanediol degradation. Its activity is regulated as follows. Inhibited by glycerol. In terms of biological role, part of the PduCDE complex that catalyzes the dehydration of 1,2-propanediol (1,2-PD) to propionaldehyde. Required for S.typhimurium growth on 1,2-PD as the sole carbon and energy source. Localized in the bacterial microcompartment (BMC) dedicated to 1,2-PD degradation. The 1,2-PD-specific bacterial microcompartment (BMC) concentrates low levels of 1,2-PD catabolic enzymes, concentrates volatile reaction intermediates thus enhancing pathway flux and keeps the level of toxic, mutagenic propionaldehyde low. The polypeptide is Propanediol dehydratase small subunit (Salmonella typhimurium (strain LT2 / SGSC1412 / ATCC 700720)).